The chain runs to 488 residues: Glutamyl-tRNA(Gln) amidotransferase subunit A (488 aa).

Catalysis depends on charge relay system residues Lys-76 and Ser-151. Catalysis depends on Ser-175, which acts as the Acyl-ester intermediate.

It belongs to the amidase family. GatA subfamily. As to quaternary structure, heterotrimer of A, B and C subunits.

It carries out the reaction L-glutamyl-tRNA(Gln) + L-glutamine + ATP + H2O = L-glutaminyl-tRNA(Gln) + L-glutamate + ADP + phosphate + H(+). Its function is as follows. Allows the formation of correctly charged Gln-tRNA(Gln) through the transamidation of misacylated Glu-tRNA(Gln) in organisms which lack glutaminyl-tRNA synthetase. The reaction takes place in the presence of glutamine and ATP through an activated gamma-phospho-Glu-tRNA(Gln). The sequence is that of Glutamyl-tRNA(Gln) amidotransferase subunit A from Symbiobacterium thermophilum (strain DSM 24528 / JCM 14929 / IAM 14863 / T).